The sequence spans 391 residues: S-adenosylmethionine synthase (391 aa).

A disordered region spans residues 1 to 20 (MPRSDYLFTSESVSEGHPDK). Residue histidine 17 coordinates ATP. Mg(2+) is bound at residue aspartate 19. Glutamate 45 serves as a coordination point for K(+). L-methionine is bound by residues glutamate 58 and glutamine 102. The segment at 102 to 112 (QSADIAQGVDA) is flexible loop. Residues 169–171 (DAK), 235–236 (KF), aspartate 244, 250–251 (RK), alanine 267, and lysine 271 each bind ATP. Aspartate 244 is a binding site for L-methionine. Lysine 275 is a binding site for L-methionine.

The protein belongs to the AdoMet synthase family. As to quaternary structure, homotetramer; dimer of dimers. It depends on Mg(2+) as a cofactor. K(+) serves as cofactor.

The protein localises to the cytoplasm. The catalysed reaction is L-methionine + ATP + H2O = S-adenosyl-L-methionine + phosphate + diphosphate. It functions in the pathway amino-acid biosynthesis; S-adenosyl-L-methionine biosynthesis; S-adenosyl-L-methionine from L-methionine: step 1/1. Functionally, catalyzes the formation of S-adenosylmethionine (AdoMet) from methionine and ATP. The overall synthetic reaction is composed of two sequential steps, AdoMet formation and the subsequent tripolyphosphate hydrolysis which occurs prior to release of AdoMet from the enzyme. This is S-adenosylmethionine synthase from Methylorubrum populi (strain ATCC BAA-705 / NCIMB 13946 / BJ001) (Methylobacterium populi).